The primary structure comprises 411 residues: Basic leucine zipper 10 (411 aa).

Disordered regions lie at residues 1-36 (MNSIFSIDDFSDPFWETPPIPLNPDSSKPVTADEVS), 76-99 (SLPSVSGQNDFEDDSRFRDRDSGN), 140-251 (SVKP…NDLK), and 362-411 (NNFA…KCVD). Residues 24 to 36 (PDSSKPVTADEVS) are compositionally biased toward polar residues. Basic and acidic residues predominate over residues 89–98 (DSRFRDRDSG). 2 stretches are compositionally biased toward polar residues: residues 146–173 (STSSPETQLQPVQSSPLTQGELGVTSSL) and 183–193 (SMKQVTSGSSR). Phosphoserine is present on serine 196. A compositionally biased stretch (acidic residues) spans 196 to 206 (SDDEDLDEENE). A bZIP domain is found at 215–278 (DVKKSRRMLS…DEAAVGNRIL (64 aa)). The basic motif stretch occupies residues 217–236 (KKSRRMLSNRESARRSRRRK). A Nuclear localization signal motif is present at residues 219–226 (SRRMLSNR). The tract at residues 243 to 257 (LETQVNDLKGEHSSL) is leucine-zipper. The span at 368-390 (PSQTSSPLQRIRNGQNHHVTPSA) shows a compositional bias: polar residues.

It belongs to the bZIP family. Forms a heterodimer with BZIP1, BZIP2, BZIP9, BZIP11, BZIP44, BZIP53 and BZIP63. Interacts with ABI3 and forms a complex made of ABI3, BZIP53 and BZIP10. Binding with LSD1 leads to cytoplasmic retention. As to expression, expressed in roots, shoots, stems, young leaves, trichomes, hydathodes, siliques, seeds, and flowers, mostly in vascular tissues.

The protein localises to the nucleus. It is found in the cytoplasm. Functionally, transcription factor that binds to the C-box-like motif (5'-TGCTGACGTCA-3') and G-box-like motif (5'-CCACGTGGCC-3'), ABRE elements, of gene promoters. Binds to the 5'-ACGT-3' motif of seed storage protein (SSP) encoding gene promoters (e.g. At2S and CRU3) and promotes their expression in seeds when in complex with ABI3 and BZIP53. Involved in the defense responses to the biotrophic pathogen Hyaloperonospora parasitica and oxidative stress responses; mediates positively cell death. Promotes BZIP53-mediated response to hypoosmolarity stress that leads to POX1/PRODH1 accumulation. The protein is Basic leucine zipper 10 (BZIP10) of Arabidopsis thaliana (Mouse-ear cress).